Here is a 178-residue protein sequence, read N- to C-terminus: Protein GrpE (178 aa).

Positions 1-26 (MQDQDKYAEQAASMEEPASADAPAIV) are disordered.

This sequence belongs to the GrpE family. As to quaternary structure, homodimer.

The protein localises to the cytoplasm. Participates actively in the response to hyperosmotic and heat shock by preventing the aggregation of stress-denatured proteins, in association with DnaK and GrpE. It is the nucleotide exchange factor for DnaK and may function as a thermosensor. Unfolded proteins bind initially to DnaJ; upon interaction with the DnaJ-bound protein, DnaK hydrolyzes its bound ATP, resulting in the formation of a stable complex. GrpE releases ADP from DnaK; ATP binding to DnaK triggers the release of the substrate protein, thus completing the reaction cycle. Several rounds of ATP-dependent interactions between DnaJ, DnaK and GrpE are required for fully efficient folding. This is Protein GrpE from Herminiimonas arsenicoxydans.